We begin with the raw amino-acid sequence, 65 residues long: uncharacterized protein (65 aa).

This is an uncharacterized protein from Thermoproteus tenax (TTV1).